The primary structure comprises 600 residues: Elongation factor 4 (600 aa).

Residues 5–187 (KYIRNFSIIA…AIVSKLPPPK (183 aa)) enclose the tr-type G domain. Residues 17–22 (DHGKST) and 134–137 (NKLD) contribute to the GTP site.

Belongs to the TRAFAC class translation factor GTPase superfamily. Classic translation factor GTPase family. LepA subfamily.

The protein localises to the cell inner membrane. The enzyme catalyses GTP + H2O = GDP + phosphate + H(+). In terms of biological role, required for accurate and efficient protein synthesis under certain stress conditions. May act as a fidelity factor of the translation reaction, by catalyzing a one-codon backward translocation of tRNAs on improperly translocated ribosomes. Back-translocation proceeds from a post-translocation (POST) complex to a pre-translocation (PRE) complex, thus giving elongation factor G a second chance to translocate the tRNAs correctly. Binds to ribosomes in a GTP-dependent manner. This Rickettsia rickettsii (strain Iowa) protein is Elongation factor 4.